A 264-amino-acid polypeptide reads, in one-letter code: General transcription factor IIF subunit 2 (264 aa).

Belongs to the TFIIF beta subunit family. In terms of assembly, heterodimer of an alpha and a beta subunit.

It localises to the nucleus. TFIIF is a general transcription initiation factor that binds to RNA polymerase II and helps to recruit it to the initiation complex in collaboration with TFIIB. The chain is General transcription factor IIF subunit 2 (gtf2f2) from Xenopus laevis (African clawed frog).